We begin with the raw amino-acid sequence, 533 residues long: Apolipoprotein N-acyltransferase (533 aa).

5 consecutive transmembrane segments (helical) span residues Phe17–Val37, Leu72–Leu92, Gly116–Met136, Gly165–Met185, and Phe190–Tyr210. Positions Val232–Leu499 constitute a CN hydrolase domain. Residue Glu274 is the Proton acceptor of the active site. Lys352 is a catalytic residue. Catalysis depends on Cys410, which acts as the Nucleophile. A helical membrane pass occupies residues Pro510–Val530.

This sequence belongs to the CN hydrolase family. Apolipoprotein N-acyltransferase subfamily.

The protein resides in the cell inner membrane. The catalysed reaction is N-terminal S-1,2-diacyl-sn-glyceryl-L-cysteinyl-[lipoprotein] + a glycerophospholipid = N-acyl-S-1,2-diacyl-sn-glyceryl-L-cysteinyl-[lipoprotein] + a 2-acyl-sn-glycero-3-phospholipid + H(+). Its pathway is protein modification; lipoprotein biosynthesis (N-acyl transfer). Its function is as follows. Catalyzes the phospholipid dependent N-acylation of the N-terminal cysteine of apolipoprotein, the last step in lipoprotein maturation. The polypeptide is Apolipoprotein N-acyltransferase (Chlorobaculum tepidum (strain ATCC 49652 / DSM 12025 / NBRC 103806 / TLS) (Chlorobium tepidum)).